The chain runs to 397 residues: Keratinocyte differentiation factor 1 (397 aa).

Pro residues predominate over residues 1 to 16 (MPRPGQPRPSSGPPRL). Disordered stretches follow at residues 1–67 (MPRP…SAEP), 124–158 (EAAW…MGSS), and 191–214 (PLAD…RGSE). Positions 44-55 (RPDPKDPGHHGP) are enriched in basic and acidic residues. The segment covering 201–211 (SLPSTFTSSPR) has biased composition (polar residues). At Ser218 the chain carries Phosphoserine. 2 disordered regions span residues 304–339 (ISTR…TMVG) and 361–392 (ARKL…GAPL). Residues 321-330 (ARSTAPAAAP) are compositionally biased toward low complexity. Residues 375 to 388 (SQDSSFQGTDTDSS) are compositionally biased toward polar residues.

The protein localises to the cytoplasm. It localises to the cell junction. Its function is as follows. Plays a role in the regulation of the epidermis formation during early development. Required both as an inhibitor of basal cell proliferation and a promoter of differentiation of basal progenitor cell progeny. The polypeptide is Keratinocyte differentiation factor 1 (Kdf1) (Rattus norvegicus (Rat)).